A 284-amino-acid polypeptide reads, in one-letter code: Bifunctional protein FolD 2 (284 aa).

Residues 165–167, threonine 192, and valine 233 each bind NADP(+); that span reads GRG.

Belongs to the tetrahydrofolate dehydrogenase/cyclohydrolase family. In terms of assembly, homodimer.

The catalysed reaction is (6R)-5,10-methylene-5,6,7,8-tetrahydrofolate + NADP(+) = (6R)-5,10-methenyltetrahydrofolate + NADPH. It catalyses the reaction (6R)-5,10-methenyltetrahydrofolate + H2O = (6R)-10-formyltetrahydrofolate + H(+). The protein operates within one-carbon metabolism; tetrahydrofolate interconversion. Its function is as follows. Catalyzes the oxidation of 5,10-methylenetetrahydrofolate to 5,10-methenyltetrahydrofolate and then the hydrolysis of 5,10-methenyltetrahydrofolate to 10-formyltetrahydrofolate. This is Bifunctional protein FolD 2 from Streptomyces avermitilis (strain ATCC 31267 / DSM 46492 / JCM 5070 / NBRC 14893 / NCIMB 12804 / NRRL 8165 / MA-4680).